The sequence spans 252 residues: Major prion protein (252 aa).

The N-terminal stretch at 1-22 (MANLGYWMLVLFVATWSDLGLC) is a signal peptide. Residues 23-229 (KKRPKPGGWN…ESQAYYQRGS (207 aa)) are interaction with GRB2, ERI3 and SYN1. The segment at 26–104 (PKPGGWNTGG…HNQWNKPSKP (79 aa)) is disordered. A run of 5 repeats spans residues 51–58 (PQGGGWGQ), 59–66 (PHGGGWGQ), 67–74 (PHGGGWGQ), 75–82 (PHGGGWGQ), and 83–90 (PHGGGWGQ). The tract at residues 51 to 90 (PQGGGWGQPHGGGWGQPHGGGWGQPHGGGWGQPHGGGWGQ) is 5 X 8 AA tandem repeats of P-H-G-G-G-W-G-Q. Gly residues predominate over residues 52 to 92 (QGGGWGQPHGGGWGQPHGGGWGQPHGGGWGQPHGGGWGQAG). Positions 60, 61, 62, 68, 69, 70, 76, 77, 78, 84, 85, and 86 each coordinate Cu(2+). An intrachain disulfide couples C178 to C213. N180 and N196 each carry an N-linked (GlcNAc...) asparagine glycan. S229 carries GPI-anchor amidated serine lipidation. Residues 230–252 (SMVLFSSPPVILLISFLIFLIVG) constitute a propeptide, removed in mature form.

It belongs to the prion family. Monomer and homodimer. Has a tendency to aggregate into amyloid fibrils containing a cross-beta spine, formed by a steric zipper of superposed beta-strands. Soluble oligomers may represent an intermediate stage on the path to fibril formation. Copper binding may promote oligomerization. Interacts with GRB2, APP, ERI3/PRNPIP and SYN1. Mislocalized cytosolically exposed PrP interacts with MGRN1; this interaction alters MGRN1 subcellular location and causes lysosomal enlargement. Interacts with KIAA1191.

It is found in the cell membrane. The protein localises to the golgi apparatus. Functionally, its primary physiological function is unclear. Has cytoprotective activity against internal or environmental stresses. May play a role in neuronal development and synaptic plasticity. May be required for neuronal myelin sheath maintenance. May play a role in iron uptake and iron homeostasis. Soluble oligomers are toxic to cultured neuroblastoma cells and induce apoptosis (in vitro). Association with GPC1 (via its heparan sulfate chains) targets PRNP to lipid rafts. Also provides Cu(2+) or Zn(2+) for the ascorbate-mediated GPC1 deaminase degradation of its heparan sulfate side chains. This is Major prion protein (PRNP) from Ateles paniscus (Black spider monkey).